The sequence spans 321 residues: Glycerol-3-phosphate phosphatase (321 aa).

Residue aspartate 34 is the Nucleophile of the active site. Residues aspartate 34, aspartate 36, and aspartate 260 each contribute to the Mg(2+) site. Residue aspartate 36 is the Proton donor of the active site.

It belongs to the HAD-like hydrolase superfamily. CbbY/CbbZ/Gph/YieH family. Homodimer. It depends on Mg(2+) as a cofactor. As to expression, detected in all tissues including red cells, lymphocytes and cultured fibroblasts (at protein level). The highest activities occur in skeletal muscle and cardiac muscle.

It carries out the reaction O-phospho-L-tyrosyl-[protein] + H2O = L-tyrosyl-[protein] + phosphate. It catalyses the reaction sn-glycerol 1-phosphate + H2O = glycerol + phosphate. The enzyme catalyses sn-glycerol 3-phosphate + H2O = glycerol + phosphate. Functionally, glycerol-3-phosphate phosphatase hydrolyzing glycerol-3-phosphate into glycerol. Thereby, regulates the cellular levels of glycerol-3-phosphate a metabolic intermediate of glucose, lipid and energy metabolism. Was also shown to have a 2-phosphoglycolate phosphatase activity and a tyrosine-protein phosphatase activity. However, their physiological relevance is unclear. In vitro, also has a phosphatase activity toward ADP, ATP, GDP and GTP. The sequence is that of Glycerol-3-phosphate phosphatase from Homo sapiens (Human).